A 389-amino-acid polypeptide reads, in one-letter code: MVTVEEFRKAQRAEGPATIMAIGTATPANCVLQSEYPDYYFRITNSEHKTELKEKFKRMCDKSMIRKRYMHLTEEILKENPNLCAYEAPSLDARQDMVVVEVPKLGKEAATKAIKEWGQPKSKITHLVFCTTSGVDMPGADYQLTKLLGLRPSVKRLMMYQQGCFAGGTVLRLAKDLAENNKGARVLVVCSEITAVTFRGPNDTHLDSLVGQALFGDGSAALIVGSDPIPEVEKPIFELVSAAQTILPDSDGAIDGHLREVGLTFHLLKDVPGLISKNIEKSLNEAFKPLGISDWNSLFWIAHPGGPAILDQVESKLALKTEKLRATRHVLSEYGNMSSACVLFILDEMRRKCVEDGLNTTGEGLEWGVLFGFGPGLTVETVVLHSVAI.

The active site involves Cys164.

It belongs to the thiolase-like superfamily. Chalcone/stilbene synthases family. Expressed in glandular trichomes. Detected at low levels in female flowers, stems, seeds, leaves and roots.

Its subcellular location is the cytoplasm. It carries out the reaction (E)-4-coumaroyl-CoA + 3 malonyl-CoA + 3 H(+) = 2',4,4',6'-tetrahydroxychalcone + 3 CO2 + 4 CoA. Chalcone synthase that can also use isovaleryl-CoA, isobutyryl-CoA or hexanoyl-CoA as substrates, but that is unable to produce olivetol or olivetolic acid. In Cannabis sativa (Hemp), this protein is Naringenin-chalcone synthase (CHS).